Consider the following 267-residue polypeptide: Undecaprenyl-diphosphatase (267 aa).

7 helical membrane-spanning segments follow: residues 4-24 (LYAL…ISST), 41-61 (FWKS…IFVF), 69-89 (LDIW…GLFV), 96-116 (LFNG…FILI), 173-193 (AAEF…AYSI), 207-227 (IPLG…IKFF), and 239-259 (FGIY…SGIL).

Belongs to the UppP family.

The protein localises to the cell inner membrane. It catalyses the reaction di-trans,octa-cis-undecaprenyl diphosphate + H2O = di-trans,octa-cis-undecaprenyl phosphate + phosphate + H(+). Functionally, catalyzes the dephosphorylation of undecaprenyl diphosphate (UPP). Confers resistance to bacitracin. This Campylobacter jejuni subsp. jejuni serotype O:23/36 (strain 81-176) protein is Undecaprenyl-diphosphatase.